The sequence spans 272 residues: uncharacterized protein (272 aa).

The N-terminal stretch at 1-22 is a signal peptide; it reads MEYIKKIALYMSVLLLIIFIGG. Cysteine 23 carries the N-palmitoyl cysteine lipid modification. A lipid anchor (S-diacylglycerol cysteine) is attached at cysteine 23.

It belongs to the staphylococcal tandem lipoprotein family.

It localises to the cell membrane. This is an uncharacterized protein from Staphylococcus aureus (strain MRSA252).